A 391-amino-acid chain; its full sequence is Cytochrome P450 165A3 (391 aa).

Residues 1-22 (MFEEKNALRGTEIHRRERFDPG) are disordered. Cysteine 342 contributes to the heme binding site.

Belongs to the cytochrome P450 family. The cofactor is heme.

The protein operates within antibiotic biosynthesis; vancomycin biosynthesis. Its function is as follows. Involved in the coupling of aromatic side chains of the heptapeptide of vancomycin. This chain is Cytochrome P450 165A3 (cyp165A3), found in Amycolatopsis orientalis (Nocardia orientalis).